We begin with the raw amino-acid sequence, 366 residues long: Chorismate synthase (366 aa).

Arg48 contributes to the NADP(+) binding site. Residues 131–133 (RAS), 243–244 (NA), Gly288, 303–307 (KPTSS), and Arg329 contribute to the FMN site.

It belongs to the chorismate synthase family. In terms of assembly, homotetramer. It depends on FMNH2 as a cofactor.

The enzyme catalyses 5-O-(1-carboxyvinyl)-3-phosphoshikimate = chorismate + phosphate. Its pathway is metabolic intermediate biosynthesis; chorismate biosynthesis; chorismate from D-erythrose 4-phosphate and phosphoenolpyruvate: step 7/7. Functionally, catalyzes the anti-1,4-elimination of the C-3 phosphate and the C-6 proR hydrogen from 5-enolpyruvylshikimate-3-phosphate (EPSP) to yield chorismate, which is the branch point compound that serves as the starting substrate for the three terminal pathways of aromatic amino acid biosynthesis. This reaction introduces a second double bond into the aromatic ring system. This Bartonella henselae (strain ATCC 49882 / DSM 28221 / CCUG 30454 / Houston 1) (Rochalimaea henselae) protein is Chorismate synthase.